We begin with the raw amino-acid sequence, 246 residues long: MEGGASNEVAESSKKIGRGKIEIKRIENTTNRQVTFCKRRNGLLKKAYELSVLCDAEVALVIFSTRGRLYEYANNSVRGTIERYKKACSDAVNPPTITEANTQYYQQEASKLRRQIRDIQNLNRHILGESLGSLNFKELKNLESRLEKGISRVRSKKHEMLVAEIEYMQKREIELQNDNMYLRSKITERTGLQQQESSVIHQGTVYESGVTSSHQSGQYNRNYIAVNLLEPNQNSSNQDQPPLQLV.

The MADS-box domain occupies 18–72; it reads RGKIEIKRIENTTNRQVTFCKRRNGLLKKAYELSVLCDAEVALVIFSTRGRLYEY. A K-box domain is found at 102 to 192; the sequence is TQYYQQEASK…RSKITERTGL (91 aa).

Interacts with AGL15 and AGL16.

It localises to the nucleus. Probable transcription factor. Interacts genetically with TT16/AGL32 in a partially antagonistic manner during flower development. Is essential for the coordination of cell divisions in ovule, seed coat development and endosperm formation. This is Agamous-like MADS-box protein AGL5 (AGL5) from Arabidopsis thaliana (Mouse-ear cress).